A 472-amino-acid chain; its full sequence is ATP synthase subunit beta (472 aa).

Gly155 to Thr162 lines the ATP pocket.

The protein belongs to the ATPase alpha/beta chains family. F-type ATPases have 2 components, CF(1) - the catalytic core - and CF(0) - the membrane proton channel. CF(1) has five subunits: alpha(3), beta(3), gamma(1), delta(1), epsilon(1). CF(0) has three main subunits: a(1), b(2) and c(9-12). The alpha and beta chains form an alternating ring which encloses part of the gamma chain. CF(1) is attached to CF(0) by a central stalk formed by the gamma and epsilon chains, while a peripheral stalk is formed by the delta and b chains.

It is found in the cell membrane. It catalyses the reaction ATP + H2O + 4 H(+)(in) = ADP + phosphate + 5 H(+)(out). In terms of biological role, produces ATP from ADP in the presence of a proton gradient across the membrane. The catalytic sites are hosted primarily by the beta subunits. The sequence is that of ATP synthase subunit beta from Fervidobacterium islandicum.